A 484-amino-acid polypeptide reads, in one-letter code: Glutamate--tRNA ligase (484 aa).

Residues Pro11–Asn21 carry the 'HIGH' region motif. A 'KMSKS' region motif is present at residues Lys252–Arg256. Residue Lys255 participates in ATP binding.

This sequence belongs to the class-I aminoacyl-tRNA synthetase family. Glutamate--tRNA ligase type 1 subfamily. As to quaternary structure, monomer.

The protein localises to the cytoplasm. It catalyses the reaction tRNA(Glu) + L-glutamate + ATP = L-glutamyl-tRNA(Glu) + AMP + diphosphate. Catalyzes the attachment of glutamate to tRNA(Glu) in a two-step reaction: glutamate is first activated by ATP to form Glu-AMP and then transferred to the acceptor end of tRNA(Glu). This is Glutamate--tRNA ligase from Staphylococcus epidermidis (strain ATCC 35984 / DSM 28319 / BCRC 17069 / CCUG 31568 / BM 3577 / RP62A).